A 199-amino-acid polypeptide reads, in one-letter code: Recombination protein RecR (199 aa).

The segment at 58–73 adopts a C4-type zinc-finger fold; that stretch reads CSACGNVDTQDPCAIC. In terms of domain architecture, Toprim spans 81 to 176; the sequence is HILCIVEEVG…SVSRLAHGVP (96 aa).

Belongs to the RecR family.

Its function is as follows. May play a role in DNA repair. It seems to be involved in an RecBC-independent recombinational process of DNA repair. It may act with RecF and RecO. This is Recombination protein RecR from Parvibaculum lavamentivorans (strain DS-1 / DSM 13023 / NCIMB 13966).